Reading from the N-terminus, the 395-residue chain is Elongation factor Tu (395 aa).

The tr-type G domain maps to 10-204; the sequence is KPHVNIGTIG…AVDEYIPTPQ (195 aa). Residues 19–26 form a G1 region; that stretch reads GHVDHGKT. GTP is bound at residue 19 to 26; sequence GHVDHGKT. Residue Thr26 coordinates Mg(2+). Residues 60-64 are G2; that stretch reads GITIS. Positions 81–84 are G3; sequence DCPG. GTP is bound by residues 81-85 and 136-139; these read DCPGH and NKCD. Residues 136–139 are G4; it reads NKCD. Positions 174 to 176 are G5; the sequence is SAL.

The protein belongs to the TRAFAC class translation factor GTPase superfamily. Classic translation factor GTPase family. EF-Tu/EF-1A subfamily. As to quaternary structure, monomer.

The protein resides in the cytoplasm. It carries out the reaction GTP + H2O = GDP + phosphate + H(+). GTP hydrolase that promotes the GTP-dependent binding of aminoacyl-tRNA to the A-site of ribosomes during protein biosynthesis. The chain is Elongation factor Tu from Geobacillus stearothermophilus (Bacillus stearothermophilus).